Consider the following 109-residue polypeptide: Thiosulfate sulfurtransferase GlpE (109 aa).

In terms of domain architecture, Rhodanese spans 16–104 (REQGAVVVDI…WRSTYPAETA (89 aa)). Catalysis depends on C64, which acts as the Cysteine persulfide intermediate.

The protein belongs to the GlpE family.

The protein resides in the cytoplasm. The catalysed reaction is thiosulfate + hydrogen cyanide = thiocyanate + sulfite + 2 H(+). The enzyme catalyses thiosulfate + [thioredoxin]-dithiol = [thioredoxin]-disulfide + hydrogen sulfide + sulfite + 2 H(+). Transferase that catalyzes the transfer of sulfur from thiosulfate to thiophilic acceptors such as cyanide or dithiols. May function in a CysM-independent thiosulfate assimilation pathway by catalyzing the conversion of thiosulfate to sulfite, which can then be used for L-cysteine biosynthesis. This Pseudomonas fluorescens (strain ATCC BAA-477 / NRRL B-23932 / Pf-5) protein is Thiosulfate sulfurtransferase GlpE.